Reading from the N-terminus, the 264-residue chain is Glutamate racemase (264 aa).

Substrate is bound by residues 12 to 13 (DS) and 44 to 45 (YG). The Proton donor/acceptor role is filled by Cys76. Position 77–78 (77–78 (NT)) interacts with substrate. Cys186 (proton donor/acceptor) is an active-site residue. A substrate-binding site is contributed by 187-188 (TH).

Belongs to the aspartate/glutamate racemases family.

It carries out the reaction L-glutamate = D-glutamate. It participates in cell wall biogenesis; peptidoglycan biosynthesis. Its function is as follows. Provides the (R)-glutamate required for cell wall biosynthesis. The polypeptide is Glutamate racemase (Fusobacterium nucleatum subsp. nucleatum (strain ATCC 25586 / DSM 15643 / BCRC 10681 / CIP 101130 / JCM 8532 / KCTC 2640 / LMG 13131 / VPI 4355)).